A 148-amino-acid polypeptide reads, in one-letter code: Glycine cleavage system H protein 5 (148 aa).

One can recognise a Lipoyl-binding domain in the interval 33–115; the sequence is VFTIGLTSVA…YGQGWIAKVK (83 aa). Lys-74 is subject to N6-lipoyllysine.

Belongs to the GcvH family. In terms of assembly, the glycine cleavage system is composed of four proteins: P, T, L and H. It depends on (R)-lipoate as a cofactor.

In terms of biological role, the glycine cleavage system catalyzes the degradation of glycine. The H protein shuttles the methylamine group of glycine from the P protein to the T protein. This Aquifex aeolicus (strain VF5) protein is Glycine cleavage system H protein 5.